The chain runs to 563 residues: Urocanate hydratase (563 aa).

Residues 53-54 (GG), Gln131, 177-179 (GMG), Glu197, Arg202, 243-244 (NA), 264-268 (QTSAH), 274-275 (YL), and Tyr323 each bind NAD(+). Residue Cys411 is part of the active site. Residue Gly493 participates in NAD(+) binding.

The protein belongs to the urocanase family. The cofactor is NAD(+).

It localises to the cytoplasm. It catalyses the reaction 4-imidazolone-5-propanoate = trans-urocanate + H2O. It functions in the pathway amino-acid degradation; L-histidine degradation into L-glutamate; N-formimidoyl-L-glutamate from L-histidine: step 2/3. In terms of biological role, catalyzes the conversion of urocanate to 4-imidazolone-5-propionate. In Yersinia pestis bv. Antiqua (strain Antiqua), this protein is Urocanate hydratase.